We begin with the raw amino-acid sequence, 211 residues long: Xanthine phosphoribosyltransferase (211 aa).

The xanthine site is built by Leu-31 and Asn-38. 138–142 (ANGRT) serves as a coordination point for 5-phospho-alpha-D-ribose 1-diphosphate. Residue Lys-166 participates in xanthine binding.

Belongs to the purine/pyrimidine phosphoribosyltransferase family. Xpt subfamily. As to quaternary structure, homodimer.

Its subcellular location is the cytoplasm. The enzyme catalyses XMP + diphosphate = xanthine + 5-phospho-alpha-D-ribose 1-diphosphate. The protein operates within purine metabolism; XMP biosynthesis via salvage pathway; XMP from xanthine: step 1/1. In terms of biological role, converts the preformed base xanthine, a product of nucleic acid breakdown, to xanthosine 5'-monophosphate (XMP), so it can be reused for RNA or DNA synthesis. The sequence is that of Xanthine phosphoribosyltransferase from Chloroflexus aurantiacus (strain ATCC 29364 / DSM 637 / Y-400-fl).